The primary structure comprises 401 residues: 8-amino-7-oxononanoate synthase (401 aa).

Substrate is bound at residue arginine 19. 106 to 107 (GY) lines the pyridoxal 5'-phosphate pocket. Histidine 131 provides a ligand contact to substrate. Pyridoxal 5'-phosphate is bound by residues serine 176, histidine 204, and threonine 233. Lysine 236 bears the N6-(pyridoxal phosphate)lysine mark. Threonine 350 provides a ligand contact to substrate.

It belongs to the class-II pyridoxal-phosphate-dependent aminotransferase family. BioF subfamily. In terms of assembly, homodimer. The cofactor is pyridoxal 5'-phosphate.

It catalyses the reaction 6-carboxyhexanoyl-[ACP] + L-alanine + H(+) = (8S)-8-amino-7-oxononanoate + holo-[ACP] + CO2. Its pathway is cofactor biosynthesis; biotin biosynthesis. Catalyzes the decarboxylative condensation of pimeloyl-[acyl-carrier protein] and L-alanine to produce 8-amino-7-oxononanoate (AON), [acyl-carrier protein], and carbon dioxide. The chain is 8-amino-7-oxononanoate synthase from Pseudomonas aeruginosa (strain ATCC 15692 / DSM 22644 / CIP 104116 / JCM 14847 / LMG 12228 / 1C / PRS 101 / PAO1).